The primary structure comprises 351 residues: Outer membrane porin protein 32 (351 aa).

Positions 1–19 (MKKSLIALAVLAASGAAMA) are cleaved as a signal peptide. Gln20 is modified (pyrrolidone carboxylic acid).

This sequence to bacterial outer membrane proteins and porins. In terms of assembly, homotrimer.

It is found in the cell outer membrane. In terms of biological role, forms anion selective channels. The protein is Outer membrane porin protein 32 (omp32) of Delftia acidovorans (Pseudomonas acidovorans).